Reading from the N-terminus, the 187-residue chain is UPF0301 protein VS_2679 (187 aa).

The protein belongs to the UPF0301 (AlgH) family.

This Vibrio atlanticus (strain LGP32) (Vibrio splendidus (strain Mel32)) protein is UPF0301 protein VS_2679.